The following is a 146-amino-acid chain: Bradykinin-like neuropeptide (146 aa).

Positions 1 to 24 (MTSSIYGFITLSVVALISQTTCRS) are cleaved as a signal peptide. 2 propeptides span residues 25–80 (LDLL…LMEA) and 92–146 (LRSY…FRYG).

As to expression, neuron L5.

The protein resides in the secreted. May have important functions in renal physiology and in animal behavior, as does bradykinin. The sequence is that of Bradykinin-like neuropeptide (LUQ-1) from Aplysia californica (California sea hare).